The primary structure comprises 162 residues: uncharacterized protein (162 aa).

This is an uncharacterized protein from Picosynechococcus sp. (strain ATCC 27264 / PCC 7002 / PR-6) (Agmenellum quadruplicatum).